The following is a 752-amino-acid chain: Probable beta-glucosidase D (752 aa).

The signal sequence occupies residues methionine 1–alanine 18. Asparagine 187 and asparagine 237 each carry an N-linked (GlcNAc...) asparagine glycan. Residue aspartate 265 is part of the active site. Residues asparagine 299, asparagine 343, asparagine 441, asparagine 510, asparagine 532, asparagine 571, asparagine 586, asparagine 638, asparagine 661, and asparagine 743 are each glycosylated (N-linked (GlcNAc...) asparagine).

This sequence belongs to the glycosyl hydrolase 3 family.

It is found in the secreted. The enzyme catalyses Hydrolysis of terminal, non-reducing beta-D-glucosyl residues with release of beta-D-glucose.. Its pathway is glycan metabolism; cellulose degradation. Functionally, beta-glucosidases are one of a number of cellulolytic enzymes involved in the degradation of cellulosic biomass. Catalyzes the last step releasing glucose from the inhibitory cellobiose. In Aspergillus flavus (strain ATCC 200026 / FGSC A1120 / IAM 13836 / NRRL 3357 / JCM 12722 / SRRC 167), this protein is Probable beta-glucosidase D (bglD).